The sequence spans 66 residues: Large ribosomal subunit protein bL32 (66 aa).

It belongs to the bacterial ribosomal protein bL32 family.

This chain is Large ribosomal subunit protein bL32, found in Rickettsia conorii (strain ATCC VR-613 / Malish 7).